A 184-amino-acid chain; its full sequence is Ribosome-recycling factor (184 aa).

It belongs to the RRF family.

The protein resides in the cytoplasm. Functionally, responsible for the release of ribosomes from messenger RNA at the termination of protein biosynthesis. May increase the efficiency of translation by recycling ribosomes from one round of translation to another. This is Ribosome-recycling factor from Caldicellulosiruptor saccharolyticus (strain ATCC 43494 / DSM 8903 / Tp8T 6331).